The following is a 187-amino-acid chain: Elongation factor P (187 aa).

Belongs to the elongation factor P family.

The protein resides in the cytoplasm. Its pathway is protein biosynthesis; polypeptide chain elongation. Involved in peptide bond synthesis. Stimulates efficient translation and peptide-bond synthesis on native or reconstituted 70S ribosomes in vitro. Probably functions indirectly by altering the affinity of the ribosome for aminoacyl-tRNA, thus increasing their reactivity as acceptors for peptidyl transferase. The sequence is that of Elongation factor P from Mycoplasmopsis pulmonis (strain UAB CTIP) (Mycoplasma pulmonis).